The chain runs to 233 residues: Purine nucleoside phosphorylase DeoD-type (233 aa).

Residue histidine 4 coordinates a purine D-ribonucleoside. Phosphate-binding positions include glycine 20, arginine 24, arginine 43, and arginine 87–threonine 90. A purine D-ribonucleoside contacts are provided by residues glutamate 179–glutamate 181 and serine 203–aspartate 204. Aspartate 204 (proton donor) is an active-site residue.

This sequence belongs to the PNP/UDP phosphorylase family. Homohexamer; trimer of homodimers.

The enzyme catalyses a purine D-ribonucleoside + phosphate = a purine nucleobase + alpha-D-ribose 1-phosphate. It carries out the reaction a purine 2'-deoxy-D-ribonucleoside + phosphate = a purine nucleobase + 2-deoxy-alpha-D-ribose 1-phosphate. Functionally, catalyzes the reversible phosphorolytic breakdown of the N-glycosidic bond in the beta-(deoxy)ribonucleoside molecules, with the formation of the corresponding free purine bases and pentose-1-phosphate. This Helicobacter pylori (strain ATCC 700392 / 26695) (Campylobacter pylori) protein is Purine nucleoside phosphorylase DeoD-type.